Reading from the N-terminus, the 180-residue chain is Adenine phosphoribosyltransferase (180 aa).

A2 carries the post-translational modification N-acetylalanine. Phosphoserine occurs at positions 4, 15, and 30. Y60 is subject to Phosphotyrosine. S66 is subject to Phosphoserine. K114 bears the N6-acetyllysine mark. T135 carries the phosphothreonine modification.

This sequence belongs to the purine/pyrimidine phosphoribosyltransferase family. As to quaternary structure, homodimer.

Its subcellular location is the cytoplasm. The enzyme catalyses AMP + diphosphate = 5-phospho-alpha-D-ribose 1-diphosphate + adenine. Its pathway is purine metabolism; AMP biosynthesis via salvage pathway; AMP from adenine: step 1/1. In terms of biological role, catalyzes a salvage reaction resulting in the formation of AMP, that is energically less costly than de novo synthesis. This chain is Adenine phosphoribosyltransferase, found in Homo sapiens (Human).